The sequence spans 59 residues: Potassium channel toxin alpha-KTx 15.2 (59 aa).

Residues 1–22 (MKFSSIILLTLLICSMSKFGNC) form the signal peptide. Position 23 is a pyrrolidone carboxylic acid (Gln23). 3 disulfides stabilise this stretch: Cys30-Cys50, Cys35-Cys55, and Cys39-Cys57.

This sequence belongs to the short scorpion toxin superfamily. Potassium channel inhibitor family. Alpha-KTx 15 subfamily. In terms of tissue distribution, expressed by the venom gland.

Its subcellular location is the secreted. Functionally, blocks both human ERG1/Kv11.1/KCNH2 potassium channels (in a reversible manner) and A-type voltage-gated potassium channels Kv4/KCND (in an irreversible manner). The presence of the Kv4-associated proteins DPP6 or DPP10 is mandatory to have high-affinity blockade of Kv4.2/KCND2 and Kv4.3/KCND3 channels. In contrast, the presence of the Kv4-associated protein KChIP1/KCNIP1 does not enhance the affinity blockade. May dispose of two functional faces (A and B); the two basic residues (Arg-40 and Lys-41) on the alpha-helix side of the peptide that blocks the hERG current (face A) and the typical dyad through which it blocks A-type currents on the beta-sheet side (face B). In adult rat brain, it binds to sites in the striatum, hippocampus, superior colliculus, and cerebellum. It shares the same target in rat brain than AaTX1 (AC Q867F4) and AmmTX3 (AC P60208). In DPP6 knockout mice, A-type currents are much less affected by the toxin than in wild-type mice. The protein is Potassium channel toxin alpha-KTx 15.2 of Olivierus martensii (Manchurian scorpion).